The sequence spans 89 residues: Double-stranded DNA-binding protein (89 aa).

Homodimer.

May play a role in transcription of several T4 genes. Binds double-stranded DNA and interacts preferentially with T4 late promoter regions. The polypeptide is Double-stranded DNA-binding protein (dsbA) (Enterobacteria phage T4 (Bacteriophage T4)).